We begin with the raw amino-acid sequence, 209 residues long: A-type ATP synthase subunit D (209 aa).

It belongs to the V-ATPase D subunit family. Has multiple subunits with at least A(3), B(3), C, D, E, F, H, I and proteolipid K(x).

The protein resides in the cell membrane. Functionally, component of the A-type ATP synthase that produces ATP from ADP in the presence of a proton gradient across the membrane. The protein is A-type ATP synthase subunit D of Archaeoglobus fulgidus (strain ATCC 49558 / DSM 4304 / JCM 9628 / NBRC 100126 / VC-16).